Reading from the N-terminus, the 267-residue chain is Putative carboxymethylenebutenolidase (267 aa).

Active-site residues include cysteine 137, aspartate 194, and histidine 226.

This sequence belongs to the dienelactone hydrolase family.

It carries out the reaction 2-(5-oxo-2,5-dihydrofuran-2-ylidene)acetate + H2O = 4-oxohex-2-enedioate + H(+). This chain is Putative carboxymethylenebutenolidase, found in Yersinia pestis.